Here is a 295-residue protein sequence, read N- to C-terminus: METIIEEYLRFIQIEKGLSSNTIGAYRRDLKKYQDYMTEHHISHIDFIDRQLIQECLGHLIDQGQSAKSIARFISTIRSFHQFAIREKYAAKDPTVLLDSPKYDKKLPDVLNVDEVLALLETPDLNKINGYRDRTMLELLYATGMRVSELIHLELENVNLIMGFVRVFGKGDKERIVPLGDAVIEYLTTYIETIRPQLLKKTVTEVLFLNMHGKPLSRQAIWKMIKQNGVKANIKKTLTPHTLRHSFATHLLENGADLRAVQEMLGHSDISTTQLYTHVSKSQIRKMYNQFHPRA.

The Core-binding (CB) domain maps to 1 to 85; the sequence is METIIEEYLR…TIRSFHQFAI (85 aa). One can recognise a Tyr recombinase domain in the interval 106-289; it reads KLPDVLNVDE…SKSQIRKMYN (184 aa). Active-site residues include Arg-146, Lys-170, His-241, Arg-244, and His-267. The active-site O-(3'-phospho-DNA)-tyrosine intermediate is Tyr-276.

It belongs to the 'phage' integrase family. XerD subfamily. Forms a cyclic heterotetrameric complex composed of two molecules of XerC and two molecules of XerD.

The protein localises to the cytoplasm. Site-specific tyrosine recombinase, which acts by catalyzing the cutting and rejoining of the recombining DNA molecules. The XerC-XerD complex is essential to convert dimers of the bacterial chromosome into monomers to permit their segregation at cell division. It also contributes to the segregational stability of plasmids. This Staphylococcus aureus (strain COL) protein is Tyrosine recombinase XerD.